The following is a 344-amino-acid chain: Putative transport protein sll0060 (344 aa).

Helical transmembrane passes span leucine 14 to leucine 34, leucine 41 to leucine 61, alanine 72 to isoleucine 92, leucine 155 to methionine 175, isoleucine 215 to phenylalanine 235, valine 237 to glycine 257, valine 262 to isoleucine 282, and isoleucine 310 to isoleucine 330.

It belongs to the autoinducer-2 exporter (AI-2E) (TC 2.A.86) family.

It localises to the cell membrane. The sequence is that of Putative transport protein sll0060 from Synechocystis sp. (strain ATCC 27184 / PCC 6803 / Kazusa).